Consider the following 108-residue polypeptide: U3-lycotoxin-Ls1w (108 aa).

The N-terminal stretch at 1–20 (MKFVLLFGVLLVTLFSYSSA) is a signal peptide. Residues 21–44 (EMLDDFDQADEDELLSLIEKEEAR) constitute a propeptide that is removed on maturation. 4 disulfide bridges follow: Cys48-Cys63, Cys55-Cys72, Cys62-Cys87, and Cys74-Cys85.

It belongs to the neurotoxin 19 (CSTX) family. 01 subfamily. As to expression, expressed by the venom gland.

The protein localises to the secreted. The sequence is that of U3-lycotoxin-Ls1w from Lycosa singoriensis (Wolf spider).